A 301-amino-acid chain; its full sequence is Putative phosphoenolpyruvate synthase regulatory protein (301 aa).

The span at 1–24 (MSEPVAPDGAQPAPAGATPQPLQP) shows a compositional bias: low complexity. The interval 1–27 (MSEPVAPDGAQPAPAGATPQPLQPIAG) is disordered. 181–188 (GVSRSGKT) contacts ADP.

The protein belongs to the pyruvate, phosphate/water dikinase regulatory protein family. PSRP subfamily.

It carries out the reaction [pyruvate, water dikinase] + ADP = [pyruvate, water dikinase]-phosphate + AMP + H(+). The catalysed reaction is [pyruvate, water dikinase]-phosphate + phosphate + H(+) = [pyruvate, water dikinase] + diphosphate. Its function is as follows. Bifunctional serine/threonine kinase and phosphorylase involved in the regulation of the phosphoenolpyruvate synthase (PEPS) by catalyzing its phosphorylation/dephosphorylation. This chain is Putative phosphoenolpyruvate synthase regulatory protein, found in Cupriavidus pinatubonensis (strain JMP 134 / LMG 1197) (Cupriavidus necator (strain JMP 134)).